A 607-amino-acid polypeptide reads, in one-letter code: uncharacterized protein (607 aa).

Disordered regions lie at residues 28–114 (GAER…KLRR) and 142–188 (DQER…NNSS). Polar residues predominate over residues 35–50 (SSHGSINSRSASPNKA). Basic and acidic residues-rich tracts occupy residues 90-102 (VNGE…DHDT) and 161-174 (KENK…KDLS). Residues 177–188 (SSSSMKKANNSS) show a composition bias toward low complexity. 2 PHD-type zinc fingers span residues 263–312 (NDYC…CKHH) and 406–459 (PILC…HSDH).

This is an uncharacterized protein from Schizosaccharomyces pombe (strain 972 / ATCC 24843) (Fission yeast).